The following is a 311-amino-acid chain: Lipoyl synthase (311 aa).

[4Fe-4S] cluster is bound by residues Cys-58, Cys-63, Cys-69, Cys-84, Cys-88, Cys-91, and Ser-298. In terms of domain architecture, Radical SAM core spans 70–287 (FGHGTATFMI…EQEALAMGFR (218 aa)).

Belongs to the radical SAM superfamily. Lipoyl synthase family. [4Fe-4S] cluster is required as a cofactor.

The protein localises to the cytoplasm. The enzyme catalyses [[Fe-S] cluster scaffold protein carrying a second [4Fe-4S](2+) cluster] + N(6)-octanoyl-L-lysyl-[protein] + 2 oxidized [2Fe-2S]-[ferredoxin] + 2 S-adenosyl-L-methionine + 4 H(+) = [[Fe-S] cluster scaffold protein] + N(6)-[(R)-dihydrolipoyl]-L-lysyl-[protein] + 4 Fe(3+) + 2 hydrogen sulfide + 2 5'-deoxyadenosine + 2 L-methionine + 2 reduced [2Fe-2S]-[ferredoxin]. The protein operates within protein modification; protein lipoylation via endogenous pathway; protein N(6)-(lipoyl)lysine from octanoyl-[acyl-carrier-protein]: step 2/2. Catalyzes the radical-mediated insertion of two sulfur atoms into the C-6 and C-8 positions of the octanoyl moiety bound to the lipoyl domains of lipoate-dependent enzymes, thereby converting the octanoylated domains into lipoylated derivatives. This is Lipoyl synthase from Thiobacillus denitrificans (strain ATCC 25259 / T1).